Reading from the N-terminus, the 427-residue chain is uncharacterized protein (427 aa).

3 consecutive transmembrane segments (helical) span residues 10–30 (LAYLVFESVLQVVIIALAGFW), 43–63 (KIISLLNVDLFTPCLIFSKLA), and 71–91 (IFEIAIIPIFFGLTTGISFIS). Thr-199 is modified (phosphothreonine). Residue Ser-234 is modified to Phosphoserine. 5 helical membrane passes run 253–273 (NLNPPLYSMIFAVVVAAIGPL), 288–308 (FAEAVTQLGSVSIPLILVVLG), 327–347 (LLIGSIIGRMILPSCFLLPII), 358–378 (ILDDPIFLVVGFLLTVSPPAI), and 397–417 (ILFWGYAVLSLPVSIIVVSGA).

It belongs to the auxin efflux carrier (TC 2.A.69) family.

It localises to the membrane. This is an uncharacterized protein from Saccharomyces cerevisiae (strain ATCC 204508 / S288c) (Baker's yeast).